The primary structure comprises 264 residues: Thymidylate synthase (264 aa).

Arg-21 contacts dUMP. His-51 provides a ligand contact to (6R)-5,10-methylene-5,6,7,8-tetrahydrofolate. 126-127 (RR) contacts dUMP. Cys-146 (nucleophile) is an active-site residue. Residues 166-169 (RSCD), Asn-177, and 207-209 (HLY) contribute to the dUMP site. Asp-169 contacts (6R)-5,10-methylene-5,6,7,8-tetrahydrofolate. Ala-263 contributes to the (6R)-5,10-methylene-5,6,7,8-tetrahydrofolate binding site.

Belongs to the thymidylate synthase family. Bacterial-type ThyA subfamily. As to quaternary structure, homodimer.

Its subcellular location is the cytoplasm. It carries out the reaction dUMP + (6R)-5,10-methylene-5,6,7,8-tetrahydrofolate = 7,8-dihydrofolate + dTMP. It participates in pyrimidine metabolism; dTTP biosynthesis. Functionally, catalyzes the reductive methylation of 2'-deoxyuridine-5'-monophosphate (dUMP) to 2'-deoxythymidine-5'-monophosphate (dTMP) while utilizing 5,10-methylenetetrahydrofolate (mTHF) as the methyl donor and reductant in the reaction, yielding dihydrofolate (DHF) as a by-product. This enzymatic reaction provides an intracellular de novo source of dTMP, an essential precursor for DNA biosynthesis. The chain is Thymidylate synthase from Salmonella paratyphi C (strain RKS4594).